The following is a 291-amino-acid chain: Undecaprenyl-diphosphatase (291 aa).

8 consecutive transmembrane segments (helical) span residues 1–21, 48–68, 102–122, 126–146, 162–182, 203–223, 231–251, and 267–287; these read MFII…LTEF, SAFT…AWVF, LHVL…DDFI, LFSV…MIIA, INYF…WPGF, SDFT…LSLL, IADI…GLIA, and FAIY…GFGI.

Belongs to the UppP family.

Its subcellular location is the cell membrane. The enzyme catalyses di-trans,octa-cis-undecaprenyl diphosphate + H2O = di-trans,octa-cis-undecaprenyl phosphate + phosphate + H(+). Its function is as follows. Catalyzes the dephosphorylation of undecaprenyl diphosphate (UPP). Confers resistance to bacitracin. This chain is Undecaprenyl-diphosphatase, found in Staphylococcus aureus (strain bovine RF122 / ET3-1).